The sequence spans 418 residues: Serine hydroxymethyltransferase (418 aa).

Residues Leu-121 and 125 to 127 contribute to the (6S)-5,6,7,8-tetrahydrofolate site; that span reads GHL. Lys-230 carries the N6-(pyridoxal phosphate)lysine modification. Residue 355-357 participates in (6S)-5,6,7,8-tetrahydrofolate binding; the sequence is SPF.

It belongs to the SHMT family. In terms of assembly, homodimer. Requires pyridoxal 5'-phosphate as cofactor.

Its subcellular location is the cytoplasm. It catalyses the reaction (6R)-5,10-methylene-5,6,7,8-tetrahydrofolate + glycine + H2O = (6S)-5,6,7,8-tetrahydrofolate + L-serine. Its pathway is one-carbon metabolism; tetrahydrofolate interconversion. It functions in the pathway amino-acid biosynthesis; glycine biosynthesis; glycine from L-serine: step 1/1. Functionally, catalyzes the reversible interconversion of serine and glycine with tetrahydrofolate (THF) serving as the one-carbon carrier. This reaction serves as the major source of one-carbon groups required for the biosynthesis of purines, thymidylate, methionine, and other important biomolecules. Also exhibits THF-independent aldolase activity toward beta-hydroxyamino acids, producing glycine and aldehydes, via a retro-aldol mechanism. This Methylococcus capsulatus (strain ATCC 33009 / NCIMB 11132 / Bath) protein is Serine hydroxymethyltransferase.